A 287-amino-acid chain; its full sequence is Polyamine aminopropyltransferase (287 aa).

In terms of domain architecture, PABS spans 5 to 238 (EIWYETLHAN…GIMTFAWASN (234 aa)). Gln33 is an S-methyl-5'-thioadenosine binding site. Residues His64 and Asp88 each coordinate spermidine. S-methyl-5'-thioadenosine-binding positions include Glu108 and 140 to 141 (DG). Residue Asp158 is the Proton acceptor of the active site. 158-161 (DCTD) is a binding site for spermidine. Pro165 is an S-methyl-5'-thioadenosine binding site.

This sequence belongs to the spermidine/spermine synthase family. Homodimer or homotetramer.

Its subcellular location is the cytoplasm. It catalyses the reaction S-adenosyl 3-(methylsulfanyl)propylamine + putrescine = S-methyl-5'-thioadenosine + spermidine + H(+). It participates in amine and polyamine biosynthesis; spermidine biosynthesis; spermidine from putrescine: step 1/1. In terms of biological role, catalyzes the irreversible transfer of a propylamine group from the amino donor S-adenosylmethioninamine (decarboxy-AdoMet) to putrescine (1,4-diaminobutane) to yield spermidine. The polypeptide is Polyamine aminopropyltransferase (Pectobacterium carotovorum subsp. carotovorum (strain PC1)).